A 911-amino-acid polypeptide reads, in one-letter code: Protein translocase subunit SecA (911 aa).

Residues glutamine 90, 108-112, and aspartate 515 contribute to the ATP site; that span reads GEGKT. Residues cysteine 891, cysteine 893, cysteine 902, and histidine 903 each coordinate Zn(2+).

This sequence belongs to the SecA family. Monomer and homodimer. Part of the essential Sec protein translocation apparatus which comprises SecA, SecYEG and auxiliary proteins SecDF-YajC and YidC. Zn(2+) is required as a cofactor.

The protein localises to the cell inner membrane. It localises to the cytoplasm. It catalyses the reaction ATP + H2O + cellular proteinSide 1 = ADP + phosphate + cellular proteinSide 2.. Part of the Sec protein translocase complex. Interacts with the SecYEG preprotein conducting channel. Has a central role in coupling the hydrolysis of ATP to the transfer of proteins into and across the cell membrane, serving both as a receptor for the preprotein-SecB complex and as an ATP-driven molecular motor driving the stepwise translocation of polypeptide chains across the membrane. The sequence is that of Protein translocase subunit SecA from Blochmanniella pennsylvanica (strain BPEN).